Reading from the N-terminus, the 530-residue chain is Chaperonin GroEL (530 aa).

ATP is bound by residues T30 to P33, K51, D87 to T91, G415, and D495.

It belongs to the chaperonin (HSP60) family. As to quaternary structure, forms a cylinder of 14 subunits composed of two heptameric rings stacked back-to-back. Interacts with the co-chaperonin GroES.

The protein resides in the cytoplasm. The enzyme catalyses ATP + H2O + a folded polypeptide = ADP + phosphate + an unfolded polypeptide.. Functionally, together with its co-chaperonin GroES, plays an essential role in assisting protein folding. The GroEL-GroES system forms a nano-cage that allows encapsulation of the non-native substrate proteins and provides a physical environment optimized to promote and accelerate protein folding. This is Chaperonin GroEL from Carsonella ruddii (strain PV).